Here is a 624-residue protein sequence, read N- to C-terminus: MSSSQAEGVIRNIIREISQTCLSRGQTLSETLIAFMVKAVVLDPTNHFNVDRTLTKQDVQKLIELCVDRLMDQTSPTLQTIKMQVYFDMNYTPRREFLEMQQKLLQSRLQSLSREITDSRAKSREDLKKLYGTIVHYIIQSSNLSSSTDINTVRETTAALQSIFPPSQLGSFMSLLKSDKEQQLKENSLIVSGIRLFNKDNGEGGEAIQSLPSILNEKLPGVVSDLERELASCERLCWQYTGLLELISERDTAHSQSPVPPRLLTQALYNTRQHEAFLRLTLADVILCAQEVTRLQSDLMSRMTLLRDAIHTKTTVPTTHVFPHFSAVGRLWAGLEQEMLLLSMLTNVASGLRVFLTAESLLTPDQMELPVRTDADRCSGTAEERVLVSETSSCECCFPESTADFQHLPLQYNGFCGVALVDRNGLLLPGNTSIGVLKHKEKYYAFSSRSAAYEFSCRADEYTAAVLETASRTPELIQLLQLQQHFTSSTAYSQLPAGHQSLTAGMPSGQKLLLKSISKSDAGVQTEIHPLQSNICTSYEWNEWEMRRKAIKLANLHSKVTRSSQSDWSLMRRHNSSQTFLPKDASCQTKRDGESLVPKAQVYLSSLRGAAGFRKVDLSRAVDE.

Belongs to the CFAP206 family.

It localises to the cytoplasm. The protein resides in the cytoskeleton. It is found in the cilium axoneme. Its subcellular location is the cilium basal body. Its function is as follows. Essential for sperm motility and is involved in the regulation of the beating frequency of motile cilia on the epithelial cells of the respiratory tract. Required for the establishment of radial spokes in sperm flagella. The chain is Cilia- and flagella-associated protein 206 (cfap206) from Danio rerio (Zebrafish).